We begin with the raw amino-acid sequence, 1115 residues long: Tbc2 translation factor, chloroplastic (1115 aa).

2 stretches are compositionally biased toward low complexity: residues 69 to 87 (TASVPSTSGASPSGSQLSS) and 163 to 175 (RRAGSGASTSGRA). Disordered stretches follow at residues 69–90 (TASVPSTSGASPSGSQLSSKAL) and 163–210 (RRAG…SSSS). The span at 176–186 (RGWGSGPGRNG) shows a compositional bias: gly residues. Over residues 187-210 (SGSSSVSVNGSGSSSNGSSSSSSS) the composition is skewed to low complexity. Repeat copies occupy residues 483 to 521 (LVLELSRARLTSFSPLQLAKAVQGLAALRYRPSPEWVEA), 607 to 645 (LDLTSRLLAAGGFSGGELQQLLEGLTRLALQPPLEWMQA), 685 to 723 (LAATQANMKQLLADTTCSAALLTALRRLNIEPPPGWVGA), 724 to 763 (LLEESRSALKNRCTDLHLANLAGSLAAWGVRPDGRWAARL), 764 to 803 (MWRSQVLMNEDRMSPRALVALLQAMVSLGLSPNPVWTQLC), 804 to 842 (LQAAVRRASQPAFEPHHYGTLMASLHALGIQPPQEWLTR), 843 to 880 (MLLSTYRCWDRFSVTHWSSLLPALVLLKARPPREWLRR), 990 to 1029 (PAAHAATSTTTATAVAHPQPQLLPQAQALPQPGPEWQAAW), and 1030 to 1068 (WAASTRLLLRVRYAPSELVLTAGWLGSLGLRPPPEWLQA). Residues 483–1068 (LVLELSRARL…LRPPPEWLQA (586 aa)) form a 9 X 38 AA approximate repeats region.

In terms of assembly, part of a 400 kDa complex which is not stably associated with RNA.

The protein resides in the plastid. Its subcellular location is the chloroplast stroma. Required for expression of the chloroplast encoded psbC mRNA, most likely for translation initiation. Interacts with the 5'-UTR of psbC. The sequence is that of Tbc2 translation factor, chloroplastic (TBC2) from Chlamydomonas reinhardtii (Chlamydomonas smithii).